A 578-amino-acid polypeptide reads, in one-letter code: Acyl-CoA ligase AKT1 (578 aa).

ATP-binding positions include S210–K218, Q350–T355, D438, R457, and K554. An SBD1 region spans residues D281 to Q350. The interval C351–Y413 is SBD2. A Peroxisomal targeting signal type 1 motif is present at residues S576–I578.

Its subcellular location is the peroxisome. It functions in the pathway mycotoxin biosynthesis. Its function is as follows. Acyl-CoA ligase; part of the gene clusters that mediate the biosynthesis of the host-selective toxins (HSTs) AK-toxins responsible for Japanese pear black spot disease by the Japanese pear pathotype. AK-toxins are esters of 9,10-epoxy 8-hydroxy 9-methyldecatrienoic acid (EDA). On cellular level, AK-toxins affect plasma membrane of susceptible cells and cause a sudden increase in loss of K(+) after a few minutes of toxin treatment. The acyl-CoA ligase AKT1, the hydrolase AKT2 and enoyl-CoA hydratase AKT3 are all involved in the biosynthesis of the AK-, AF- and ACT-toxin common 9,10-epoxy-8-hydroxy-9-methyl-decatrienoic acid (EDA) structural moiety. Part of the EDA biosynthesis occurs in the peroxisome since these 3 enzymes are localized in peroxisomes. The exact roles of the 3 enzymes, as well as of additional AK-toxin clusters enzymes, including AKT4, AKT6 and AKTS1, have still to be elucidated. The Cytochrome P450 monooxygenase AKT7 on the other side functions to limit production of EDA and AK-toxin, probably via the catalysis of a side reaction of EDA or its precursor. The chain is Acyl-CoA ligase AKT1 from Alternaria alternata (Alternaria rot fungus).